A 666-amino-acid polypeptide reads, in one-letter code: Peptidase S41 family protein phomP1 (666 aa).

An N-terminal signal peptide occupies residues 1–27 (MSSFLVQTAVVRLFLLGVVFWFPFALS). 3 N-linked (GlcNAc...) asparagine glycosylation sites follow: N70, N214, and N234. The peptidase S41 domain stretch occupies residues 303 to 504 (DVAVLQITSF…LLQAQGVRTV (202 aa)). 2 N-linked (GlcNAc...) asparagine glycosylation sites follow: N555 and N612.

Belongs to the peptidase S41A family.

It functions in the pathway mycotoxin biosynthesis. In terms of biological role, peptidase S41 family protein; part of the gene cluster that mediates the biosynthesis of the phomopsins, a group of hexapeptide mycotoxins which infects lupins and causes lupinosis disease in livestock. Within the pathway, phomP1 and phomP1' are probably involved in the processing of the phomA and phomA' precursors. The pathway starts with the processing of the precursor phomA by several endopeptidases including kexin proteases as well as the cluster-specific S41 family peptidase phomP1 and the oligopeptidase phomG to produce 10 identical copies of the hexapeptide Tyr-Val-Ile-Pro-Ile-Asp. After being excised from the precursor peptide, the core peptides are cyclized and modified post-translationally by enzymes encoded within the gene cluster. The timing and order of proteolysis of the phomA precursor and PTMs are still unknown. Two tyrosinase-like enzymes, phomQ1 and phomQ2, catalyze the chlorination and hydroxylation of Tyr, respectively. PhomYb, is proposed to be involved in the construction of the macrocyclic structure. The other 4 ustYa family proteins may be involved in PTMs that generate the unique structure of phomopsin A. PhomYa is required for the hydroxylation of C-beta of Tyr. PhomYc, phomYd, and phomYe are responsible for the biosynthesis of 2,3-dehydroisoleucine (dIle), 2,3-dehydroaspartic acid (dAsp), and 3,4-dehydroproline (dPro), respectively. While dIle formation by phomYc is indispensable for the installation of dAsp by phomYd, the order of the other PTMs have not been elucidated yet. Most of the biosynthetic enzymes likely have broad substrate specificity, and thus, there might be a metabolic grid from a precursor to phomopsin A. The enzyme(s) responsible for the biosynthesis of 3,4-dehydrovaline (dVal) have also not been identified yet. Finally, phomM acts as an S-adenosylmethionine-dependent alpha-N-methyltransferase that catalyzes two successive N-methylation reactions, converting N-desmethyl-phomopsin A to phomopsin A and phomopsin A further to an N,N-dimethylated congener called phomopsin E. This chain is Peptidase S41 family protein phomP1, found in Diaporthe leptostromiformis (Lupinosis disease fungus).